An 804-amino-acid polypeptide reads, in one-letter code: DNA mismatch repair protein MutS (804 aa).

Residue 614–621 participates in ATP binding; the sequence is GPNMAGKS.

Belongs to the DNA mismatch repair MutS family.

Functionally, this protein is involved in the repair of mismatches in DNA. It is possible that it carries out the mismatch recognition step. This protein has a weak ATPase activity. This chain is DNA mismatch repair protein MutS, found in Ehrlichia chaffeensis (strain ATCC CRL-10679 / Arkansas).